We begin with the raw amino-acid sequence, 354 residues long: Uroporphyrinogen decarboxylase (354 aa).

Residues Arg-27 to Arg-31, Asp-77, Tyr-153, Thr-208, and His-326 each bind substrate.

Belongs to the uroporphyrinogen decarboxylase family. Homodimer.

The protein resides in the cytoplasm. The enzyme catalyses uroporphyrinogen III + 4 H(+) = coproporphyrinogen III + 4 CO2. It participates in porphyrin-containing compound metabolism; protoporphyrin-IX biosynthesis; coproporphyrinogen-III from 5-aminolevulinate: step 4/4. In terms of biological role, catalyzes the decarboxylation of four acetate groups of uroporphyrinogen-III to yield coproporphyrinogen-III. In Neisseria gonorrhoeae (strain ATCC 700825 / FA 1090), this protein is Uroporphyrinogen decarboxylase.